The sequence spans 279 residues: 4-deoxy-L-threo-5-hexosulose-uronate ketol-isomerase (279 aa).

4 residues coordinate Zn(2+): histidine 197, histidine 199, glutamate 204, and histidine 246.

Belongs to the KduI family. Zn(2+) serves as cofactor.

It catalyses the reaction 5-dehydro-4-deoxy-D-glucuronate = 3-deoxy-D-glycero-2,5-hexodiulosonate. It functions in the pathway glycan metabolism; pectin degradation; 2-dehydro-3-deoxy-D-gluconate from pectin: step 4/5. Its function is as follows. Catalyzes the isomerization of 5-dehydro-4-deoxy-D-glucuronate to 3-deoxy-D-glycero-2,5-hexodiulosonate. The sequence is that of 4-deoxy-L-threo-5-hexosulose-uronate ketol-isomerase from Kineococcus radiotolerans (strain ATCC BAA-149 / DSM 14245 / SRS30216).